A 732-amino-acid polypeptide reads, in one-letter code: 1,4-alpha-glucan branching enzyme GlgB (732 aa).

The Nucleophile role is filled by Asp-409. Glu-462 serves as the catalytic Proton donor.

It belongs to the glycosyl hydrolase 13 family. GlgB subfamily. Monomer.

The catalysed reaction is Transfers a segment of a (1-&gt;4)-alpha-D-glucan chain to a primary hydroxy group in a similar glucan chain.. It functions in the pathway glycan biosynthesis; glycogen biosynthesis. Its function is as follows. Catalyzes the formation of the alpha-1,6-glucosidic linkages in glycogen by scission of a 1,4-alpha-linked oligosaccharide from growing alpha-1,4-glucan chains and the subsequent attachment of the oligosaccharide to the alpha-1,6 position. This chain is 1,4-alpha-glucan branching enzyme GlgB, found in Corynebacterium diphtheriae (strain ATCC 700971 / NCTC 13129 / Biotype gravis).